A 458-amino-acid polypeptide reads, in one-letter code: RuvB-like helicase 1 (458 aa).

The tract at residues 1-29 is disordered; the sequence is MVQISEVKGNSRDNRTAAHTHIKGLGLRP. 71–78 provides a ligand contact to ATP; that stretch reads GGPGTGKT.

Belongs to the RuvB family. May form heterododecamers with RVB2. Component of the SWR1 chromatin remodeling complex, the INO80 chromatin remodeling complex, and of the R2TP complex.

The protein resides in the nucleus. The enzyme catalyses ATP + H2O = ADP + phosphate + H(+). Its function is as follows. DNA helicase which participates in several chromatin remodeling complexes, including the SWR1 and the INO80 complexes. The SWR1 complex mediates the ATP-dependent exchange of histone H2A for the H2A variant HZT1 leading to transcriptional regulation of selected genes by chromatin remodeling. The INO80 complex remodels chromatin by shifting nucleosomes and is involved in DNA repair. Also involved in pre-rRNA processing. The chain is RuvB-like helicase 1 (rvb1) from Emericella nidulans (strain FGSC A4 / ATCC 38163 / CBS 112.46 / NRRL 194 / M139) (Aspergillus nidulans).